The chain runs to 253 residues: MPLHKYPPALWDVLKLKDGIYARLPEHYRRSLLEKHKPYPVHWKPHGLKYRLNPKSGQRERVQDVPILPYFPPQANKGLWGGEGWVTGYHYANNDKLSARVKKVWKPQLFKRELYSEILDKKFSITVTMRTLDLIDAAYGFDFYILKTPKEDLNSKVGMDFKRAMLMRLASKDSNLYPNDPSKRDQIYNKYKEFVIPMEEAEWVGLSLEEAVEKQRLLEKKDPTPLFKVYVEELVKQIETQTLAEPAIIGKKP.

The N-terminal 55 residues, 1–55 (MPLHKYPPALWDVLKLKDGIYARLPEHYRRSLLEKHKPYPVHWKPHGLKYRLNPK), are a transit peptide targeting the mitochondrion.

Belongs to the bacterial ribosomal protein bL28 family. In terms of assembly, component of the mitochondrial ribosome large subunit (39S) which comprises a 16S rRNA and about 50 distinct proteins.

Its subcellular location is the mitochondrion. The chain is Large ribosomal subunit protein bL28m (mrpl28) from Xenopus laevis (African clawed frog).